We begin with the raw amino-acid sequence, 160 residues long: Phosphopantetheine adenylyltransferase (160 aa).

Thr9 is a binding site for substrate. Residues 9-10 (TF) and His17 each bind ATP. Lys41, Leu73, and Arg87 together coordinate substrate. ATP contacts are provided by residues 88–90 (GLR), Glu98, and 123–129 (YMFISAS).

This sequence belongs to the bacterial CoaD family. In terms of assembly, homohexamer. Mg(2+) serves as cofactor.

The protein localises to the cytoplasm. The catalysed reaction is (R)-4'-phosphopantetheine + ATP + H(+) = 3'-dephospho-CoA + diphosphate. It functions in the pathway cofactor biosynthesis; coenzyme A biosynthesis; CoA from (R)-pantothenate: step 4/5. In terms of biological role, reversibly transfers an adenylyl group from ATP to 4'-phosphopantetheine, yielding dephospho-CoA (dPCoA) and pyrophosphate. This is Phosphopantetheine adenylyltransferase from Thiobacillus denitrificans (strain ATCC 25259 / T1).